The primary structure comprises 426 residues: Hemojuvelin (426 aa).

An N-terminal signal peptide occupies residues 1–35 (MGEPGQSPSPRSSHGSPPTLSTLTLLLLLCGHAHS). Phosphotyrosine is present on Tyr-46. A glycan (N-linked (GlcNAc...) asparagine) is linked at Asn-118. The tract at residues 119–142 (CSRQGPTAPPPPRGPALPGAGSGL) is disordered. 2 disulfides stabilise this stretch: Cys-148–Cys-230 and Cys-167–Cys-317. Asn-213 and Asn-372 each carry an N-linked (GlcNAc...) asparagine glycan. Asp-400 carries the GPI-anchor amidated aspartate lipid modification. Positions 401–426 (AGVPLSSATLLAPLLSGLFVLWLCIQ) are cleaved as a propeptide — removed in mature form.

The protein belongs to the repulsive guidance molecule (RGM) family. As to quaternary structure, interacts with BMP2 and BMP4. Interacts with BMP6. Interacts with BMPR1B. Interacts with TMPRSS6. Post-translationally, autocatalytically cleaved at low pH; the two chains remain linked via two disulfide bonds. Also proteolytically processed by TMPRSS6, several fragments being released in the extracellular space; regulates HJV activity in BMP signaling and thefore iron homeostasis. As to expression, adult and fetal liver, heart, and skeletal muscle.

It localises to the cell membrane. Acts as a bone morphogenetic protein (BMP) coreceptor. Through enhancement of BMP signaling regulates hepcidin (HAMP) expression and regulates iron homeostasis. The polypeptide is Hemojuvelin (Homo sapiens (Human)).